The following is a 520-amino-acid chain: Cyclic AMP-responsive element-binding protein 3-like protein 2 (520 aa).

The Cytoplasmic segment spans residues 1–379 (MEVLESGEQG…KLAGTQTGTC (379 aa)). Serine 93 carries the post-translational modification Phosphoserine. Lysine 178 is covalently cross-linked (Glycyl lysine isopeptide (Lys-Gly) (interchain with G-Cter in SUMO2)). Residue serine 191 is modified to Phosphoserine. Residues 195-264 (APVDHLHLPP…PHKLQGSGPL (70 aa)) are disordered. Low complexity-rich tracts occupy residues 208-220 (SSHG…SLSP) and 234-255 (SPSR…LTAP). The bZIP domain occupies 294 to 357 (ALKKIRRKIK…RTLLQQLQKL (64 aa)). The basic motif stretch occupies residues 296–325 (KKIRRKIKNKISAQESRRKKKEYMDSLEKK). The tract at residues 336–357 (LRKKVEVLENTNRTLLQQLQKL) is leucine-zipper. A helical; Signal-anchor for type II membrane protein membrane pass occupies residues 380 to 400 (LMVVVLCFAVAFGSFFQGYGP). Topologically, residues 401 to 520 (YPSATKMALP…ELDRRVNTTF (120 aa)) are lumenal. The S1P recognition motif lies at 427–430 (RNLL). Asparagine 480, asparagine 504, and asparagine 517 each carry an N-linked (GlcNAc...) asparagine glycan.

The protein belongs to the bZIP family. ATF subfamily. Binds DNA as a dimer. Upon ER stress, translocated to the Golgi apparatus, where it is processed by regulated intramembrane proteolysis (RIP) to release the cytosol-facing N-terminal transcription factor domain. The cleavage is performed sequentially by site-1 and site-2 proteases (S1P/MBTPS1 and S2P/MBTPS2). Post-translationally, N-glycosylated. In terms of processing, ubiquitinated by HRD1/SYVN1; undergoes 'Lys-48'-linked ubiquitination, followed by rapid proteasomal degradation under normal conditions. Upon ER stress, SYVN1 E3 ubiquitin-protein ligase dissociates from its substrate, ubiquitination does not occur and CREB3L2 is stabilized. As to expression, widely expressed with highest levels in placenta, lung, spleen and intestine, and lowest levels in heart, brain, skeletal muscle, thymus, colon and leukocytes. In fetal tissues, the weakest expression is detected in brain and heart.

It localises to the endoplasmic reticulum membrane. Its subcellular location is the nucleus. Its function is as follows. Transcription factor involved in unfolded protein response (UPR). In the absence of endoplasmic reticulum (ER) stress, inserted into ER membranes, with N-terminal DNA-binding and transcription activation domains oriented toward the cytosolic face of the membrane. In response to ER stress, transported to the Golgi, where it is cleaved in a site-specific manner by resident proteases S1P/MBTPS1 and S2P/MBTPS2. The released N-terminal cytosolic domain is translocated to the nucleus to effect transcription of specific target genes. Plays a critical role in chondrogenesis by activating the transcription of SEC23A, which promotes the transport and secretion of cartilage matrix proteins, and possibly that of ER biogenesis-related genes. In a neuroblastoma cell line, protects cells from ER stress-induced death. In vitro activates transcription of target genes via direct binding to the CRE site. The chain is Cyclic AMP-responsive element-binding protein 3-like protein 2 (CREB3L2) from Homo sapiens (Human).